The chain runs to 423 residues: Carboxypeptidase B2 (423 aa).

Positions 1–22 are cleaved as a signal peptide; sequence MKLYSLGVLVATVLFCGEHAFA. A propeptide spans 23–114 (activation peptide); it reads FQRGQVLSAL…QTSNDTISPR (92 aa). N-linked (GlcNAc...) asparagine glycosylation is found at Asn-44, Asn-73, Asn-85, and Asn-108. Residues 122–419 enclose the Peptidase M14 domain; it reads QYHSLNEIYS…VAVAKIASHV (298 aa). Cys-178 and Cys-191 are disulfide-bonded. Residues His-181 and Glu-184 each contribute to the Zn(2+) site. Residues 181-184 and Arg-239 each bind substrate; that span reads HARE. N-linked (GlcNAc...) asparagine glycosylation is present at Asn-241. Intrachain disulfides connect Cys-250–Cys-274 and Cys-265–Cys-279. 256–257 contributes to the substrate binding site; that stretch reads NR. His-310 is a binding site for Zn(2+). Substrate is bound by residues 311–312 and Tyr-363; that span reads SY. The Proton donor/acceptor role is filled by Glu-385.

Belongs to the peptidase M14 family. Requires Zn(2+) as cofactor.

It localises to the secreted. It catalyses the reaction Release of C-terminal Arg and Lys from a polypeptide.. Its activity is regulated as follows. TAFI/CPB2 is unique among carboxypeptidases in that it spontaneously inactivates with a short half-life, a property that is crucial for its role in controlling blood clot lysis. The zymogen is stabilized by interactions with the activation peptide. Release of the activation peptide increases a dynamic flap mobility and in time this leads to conformational changes that disrupt the catalytic site and expose a cryptic thrombin-cleavage site present at Arg-324. In terms of biological role, cleaves C-terminal arginine or lysine residues from biologically active peptides such as kinins or anaphylatoxins in the circulation thereby regulating their activities. Down-regulates fibrinolysis by removing C-terminal lysine residues from fibrin that has already been partially degraded by plasmin. This Bos taurus (Bovine) protein is Carboxypeptidase B2 (CPB2).